We begin with the raw amino-acid sequence, 660 residues long: DNA mismatch repair protein MutL (660 aa).

The tract at residues Asp-408–Phe-436 is disordered. Residues Glu-425–Phe-436 are compositionally biased toward polar residues.

The protein belongs to the DNA mismatch repair MutL/HexB family.

Its function is as follows. This protein is involved in the repair of mismatches in DNA. It is required for dam-dependent methyl-directed DNA mismatch repair. May act as a 'molecular matchmaker', a protein that promotes the formation of a stable complex between two or more DNA-binding proteins in an ATP-dependent manner without itself being part of a final effector complex. This Streptococcus uberis (strain ATCC BAA-854 / 0140J) protein is DNA mismatch repair protein MutL.